Consider the following 262-residue polypeptide: Probable dihydroorotate dehydrogenase B (NAD(+)), electron transfer subunit (262 aa).

Residues V4–V97 enclose the FAD-binding FR-type domain. [2Fe-2S] cluster is bound by residues C217, C222, C225, and C234.

The protein belongs to the PyrK family. As to quaternary structure, heterotetramer of 2 PyrK and 2 PyrD type B subunits. Requires [2Fe-2S] cluster as cofactor. FAD is required as a cofactor.

The protein operates within pyrimidine metabolism; UMP biosynthesis via de novo pathway; orotate from (S)-dihydroorotate (NAD(+) route): step 1/1. Functionally, responsible for channeling the electrons from the oxidation of dihydroorotate from the FMN redox center in the PyrD type B subunit to the ultimate electron acceptor NAD(+). The polypeptide is Probable dihydroorotate dehydrogenase B (NAD(+)), electron transfer subunit (Methanopyrus kandleri (strain AV19 / DSM 6324 / JCM 9639 / NBRC 100938)).